Consider the following 259-residue polypeptide: 3'-5' ssDNA/RNA exonuclease TatD (259 aa).

The a divalent metal cation site is built by glutamate 92, histidine 128, and histidine 153.

Belongs to the metallo-dependent hydrolases superfamily. TatD-type hydrolase family. TatD subfamily. Monomer. Mg(2+) is required as a cofactor.

It localises to the cytoplasm. 3'-5' exonuclease that prefers single-stranded DNA and RNA. May play a role in the H(2)O(2)-induced DNA damage repair. In Erwinia amylovora (strain ATCC 49946 / CCPPB 0273 / Ea273 / 27-3), this protein is 3'-5' ssDNA/RNA exonuclease TatD.